A 140-amino-acid polypeptide reads, in one-letter code: Nucleoside diphosphate kinase (140 aa).

ATP-binding residues include lysine 11, phenylalanine 59, arginine 87, threonine 93, arginine 104, and asparagine 114. The Pros-phosphohistidine intermediate role is filled by histidine 117.

The protein belongs to the NDK family. Homotetramer. Requires Mg(2+) as cofactor.

The protein resides in the cytoplasm. It carries out the reaction a 2'-deoxyribonucleoside 5'-diphosphate + ATP = a 2'-deoxyribonucleoside 5'-triphosphate + ADP. The catalysed reaction is a ribonucleoside 5'-diphosphate + ATP = a ribonucleoside 5'-triphosphate + ADP. Its function is as follows. Major role in the synthesis of nucleoside triphosphates other than ATP. The ATP gamma phosphate is transferred to the NDP beta phosphate via a ping-pong mechanism, using a phosphorylated active-site intermediate. The chain is Nucleoside diphosphate kinase from Persephonella marina (strain DSM 14350 / EX-H1).